The chain runs to 186 residues: Elongation factor P (186 aa).

It belongs to the elongation factor P family.

The protein resides in the cytoplasm. It functions in the pathway protein biosynthesis; polypeptide chain elongation. Its function is as follows. Involved in peptide bond synthesis. Stimulates efficient translation and peptide-bond synthesis on native or reconstituted 70S ribosomes in vitro. Probably functions indirectly by altering the affinity of the ribosome for aminoacyl-tRNA, thus increasing their reactivity as acceptors for peptidyl transferase. The sequence is that of Elongation factor P from Prochlorococcus marinus (strain MIT 9211).